The following is a 287-amino-acid chain: Isopentenyl-diphosphate Delta-isomerase I (287 aa).

The region spanning 105-257 (LLHRAFSVFL…GVKLSPWFRL (153 aa)) is the Nudix hydrolase domain. Residues C142 and Y207 contribute to the active site.

The protein belongs to the IPP isomerase type 1 family.

It catalyses the reaction isopentenyl diphosphate = dimethylallyl diphosphate. Its pathway is isoprenoid biosynthesis; dimethylallyl diphosphate biosynthesis; dimethylallyl diphosphate from isopentenyl diphosphate: step 1/1. It functions in the pathway porphyrin-containing compound metabolism; chlorophyll biosynthesis. Its function is as follows. Catalyzes the 1,3-allylic rearrangement of the homoallylic substrate isopentenyl (IPP) to its highly electrophilic allylic isomer, dimethylallyl diphosphate (DMAPP). The protein is Isopentenyl-diphosphate Delta-isomerase I (IPI1) of Clarkia breweri (Fairy fans).